The following is a 241-amino-acid chain: MILYVPKSFSISAPISDIHLQSVLETKNTFHNNNEKLGYILGLSFGNYVNQTFEKQKKIGIELDRNSLLKGIQDAISGNLKLSHQDISSGLKELEKKLKHATKIQLKKNAKENFIQGELYMKNFSKLKGVKKTSSGLLYLLERAGEGEALKDETKITVHYKGTLINGLEFDNSYKRGRPVSLRLKDVILGWKEGLKYIKKGGKIKLVIPPNLAYGTEEVNGIPANSTLIFDIELLDVVNGV.

Residues glutamate 153–valine 241 enclose the PPIase FKBP-type domain.

Belongs to the FKBP-type PPIase family.

It catalyses the reaction [protein]-peptidylproline (omega=180) = [protein]-peptidylproline (omega=0). PPIases accelerate the folding of proteins. It catalyzes the cis-trans isomerization of proline imidic peptide bonds in oligopeptides. The chain is FKBP-type peptidyl-prolyl cis-trans isomerase FkpA (fkpA) from Buchnera aphidicola subsp. Acyrthosiphon pisum (strain APS) (Acyrthosiphon pisum symbiotic bacterium).